The sequence spans 419 residues: Mitogen-activated protein kinase spm1 (419 aa).

The 292-residue stretch at 23 to 314 (YTVTKELGQG…VEEALEHPYL (292 aa)) folds into the Protein kinase domain. ATP contacts are provided by residues 29–37 (LGQGAYGIV) and K52. The active-site Proton acceptor is D149.

It belongs to the protein kinase superfamily. Ser/Thr protein kinase family. MAP kinase subfamily. Mg(2+) is required as a cofactor. In terms of processing, phosphorylated by the MAP kinase kinase mkk1.

The catalysed reaction is L-seryl-[protein] + ATP = O-phospho-L-seryl-[protein] + ADP + H(+). It carries out the reaction L-threonyl-[protein] + ATP = O-phospho-L-threonyl-[protein] + ADP + H(+). Its function is as follows. Mitogen-activated protein kinase, part of the mkh1-mkk1-spm1 MAPK cascade that regulates vegetative growth, conidial formation, colony surface hydrophobicity, osmotic stress, cell wall integrity maintenance, carbon and nitrogen source utilization, chitin distribution, septa formation, and pathogenicity. The polypeptide is Mitogen-activated protein kinase spm1 (Cytospora mali (Apple Valsa canker fungus)).